Here is a 99-residue protein sequence, read N- to C-terminus: Integration host factor subunit beta (99 aa).

The protein belongs to the bacterial histone-like protein family. As to quaternary structure, heterodimer of an alpha and a beta chain.

This protein is one of the two subunits of integration host factor, a specific DNA-binding protein that functions in genetic recombination as well as in transcriptional and translational control. The polypeptide is Integration host factor subunit beta (Rhizobium etli (strain CIAT 652)).